The sequence spans 226 residues: Teichuronic acid biosynthesis protein TuaF (226 aa).

2 consecutive transmembrane segments (helical) span residues 15 to 35 (NIIWIIAVPIILGAAGYILPS) and 202 to 222 (VLGVMIGLTIAFMFVVIPEFF).

The protein resides in the cell membrane. Its pathway is cell wall biogenesis; teichuronic acid biosynthesis. The sequence is that of Teichuronic acid biosynthesis protein TuaF (tuaF) from Bacillus subtilis (strain 168).